We begin with the raw amino-acid sequence, 388 residues long: Sphingosine N-acyltransferase-like protein FUM17 (388 aa).

The next 2 helical transmembrane spans lie at 60 to 80 and 113 to 133; these read SWALPLLLTIVLPVIYAIHPV and LWDLAFVAFYANALFLARKFI. Asn146 is a glycosylation site (N-linked (GlcNAc...) asparagine). Residues 151 to 368 enclose the TLC domain; it reads GKQQRFMEQM…LLRNAYRLLF (218 aa). 4 helical membrane-spanning segments follow: residues 166-186, 204-224, 241-261, and 339-359; these read FAVMGPFGLYVMKTTPGLWIF, IKFYYLLQAAYWVQQSVVLVL, IITITLIALSYRFHFTHIGIS, and FITFGLLATLQTLNIIWLYCL.

Belongs to the sphingosine N-acyltransferase family.

The protein resides in the endoplasmic reticulum membrane. It participates in mycotoxin biosynthesis. In terms of biological role, sphingosine N-acyltransferase-like protein; part of the gene cluster that mediates the biosynthesis of fumonisins B1 (FB1), B2 (FB2), B3 (FB3), and B4 (FB4), which are carcinogenic mycotoxins. May contribute to the biosynthesis of ceramide via interaction with Cer3. Does not confer resistance to FB1. The biosynthesis starts with the FUM1-catalyzed carbon chain assembly from one molecule of acetyl-CoA, eight molecules of malonyl-CoA, and two molecules of methionine (in S-adenosyl form). The C18 polyketide chain is released from the enzyme by a nucleophilic attack of a carbanion, which is derived from R-carbon of alanine by decarboxylation, on the carbonyl carbon of polyketide acyl chain. This step is catalyzed by the pyridoxal 5'-phosphate-dependent aminoacyl transferase FUM8. The resultant 3-keto intermediate is then stereospecifically reduced to a 3-hydroxyl product by reductase FUM13. Subsequent oxidations at C-10 by the cytochrome P450 monooxygenase FUM2, C-14 and C-15 by FUM6, FUM12 or FUM15, tricarballylic esterification of the hydroxyl groups on C-14 and C-15 by acyltransferase FUM14, and C-5 hydroxylation by 2-keto-glutarate-dependent dioxygenase FUM3 furnish the biosynthesis of fumonisins. The tricarballylic moieties are most likely derived from the citric acid cycle, and their addition to the carbon backbone may involve FUM7, FUM10, FUM11 and FUM14. The chain is Sphingosine N-acyltransferase-like protein FUM17 from Gibberella moniliformis (strain M3125 / FGSC 7600) (Maize ear and stalk rot fungus).